Here is a 208-residue protein sequence, read N- to C-terminus: Thymidylate kinase (208 aa).

10–17 is an ATP binding site; it reads GPEGSGKT.

The protein belongs to the thymidylate kinase family.

The catalysed reaction is dTMP + ATP = dTDP + ADP. In terms of biological role, phosphorylation of dTMP to form dTDP in both de novo and salvage pathways of dTTP synthesis. The chain is Thymidylate kinase from Bacillus anthracis.